The sequence spans 282 residues: Succinate dehydrogenase [ubiquinone] iron-sulfur subunit, mitochondrial (282 aa).

A mitochondrion-targeting transit peptide spans 1–30 (MAATVGVSLKRGFPAAVLGRVGLQFQACRG). The 94-residue stretch at 42–135 (KKFAIYRWDP…VSKIYPLPHM (94 aa)) folds into the 2Fe-2S ferredoxin-type domain. An N6-acetyllysine mark is found at Lys53 and Lys57. Residues Cys95, Cys100, Cys103, and Cys115 each coordinate [2Fe-2S] cluster. Residues 148–220 (FYAQYKSIEP…PAVLMQAYRW (73 aa)) are interaction with SDHAF1. Residues 178-208 (DREKLDGLYECILCACCSTSCPSYWWNGDKY) enclose the 4Fe-4S ferredoxin-type domain. Positions 188, 191, and 194 each coordinate [4Fe-4S] cluster. A [3Fe-4S] cluster-binding site is contributed by Cys198. Trp203 contacts a ubiquinone. [3Fe-4S] cluster is bound by residues Cys245 and Cys251. Cys255 contacts [4Fe-4S] cluster.

Belongs to the succinate dehydrogenase/fumarate reductase iron-sulfur protein family. As to quaternary structure, component of complex II composed of four subunits: the flavoprotein (FP) SDHA, iron-sulfur protein (IP) SDHB, and a cytochrome b560 composed of SDHC and SDHD. Interacts with SDHAF1; the interaction is required for iron-sulfur cluster incorporation into SDHB. The cofactor is [2Fe-2S] cluster. Requires [3Fe-4S] cluster as cofactor. It depends on [4Fe-4S] cluster as a cofactor.

Its subcellular location is the mitochondrion inner membrane. The enzyme catalyses a quinone + succinate = fumarate + a quinol. It catalyses the reaction (R)-malate + a quinone = enol-oxaloacetate + a quinol. It carries out the reaction (S)-malate + a quinone = enol-oxaloacetate + a quinol. It participates in carbohydrate metabolism; tricarboxylic acid cycle; fumarate from succinate (eukaryal route): step 1/1. With respect to regulation, enol-oxaloacetate inhibits the succinate dehydrogenase activity. Its function is as follows. Iron-sulfur protein (IP) subunit of the succinate dehydrogenase complex (mitochondrial respiratory chain complex II), responsible for transferring electrons from succinate to ubiquinone (coenzyme Q). SDH also oxidizes malate to the non-canonical enol form of oxaloacetate, enol-oxaloacetate. Enol-oxaloacetate, which is a potent inhibitor of the succinate dehydrogenase activity, is further isomerized into keto-oxaloacetate. The protein is Succinate dehydrogenase [ubiquinone] iron-sulfur subunit, mitochondrial (Sdhb) of Mus musculus (Mouse).